The chain runs to 101 residues: Gastrin (101 aa).

Positions 1-21 (MQRLCVYVLIFALALAAFSEA) are cleaved as a signal peptide. A disordered region spans residues 22–82 (SWKPRSQQPD…SKKQGPWLEE (61 aa)). Residue Gln-59 is modified to Pyrrolidone carboxylic acid; in form big gastrin. The residue at position 76 (Gln-76) is a Pyrrolidone carboxylic acid; in form gastrin. The residue at position 87 (Tyr-87) is a Sulfotyrosine; partial. A Phenylalanine amide modification is found at Phe-92. A Phosphoserine modification is found at Ser-96. A propeptide spans 96 to 101 (SAEDEN) (removed in mature form).

Belongs to the gastrin/cholecystokinin family. Two different processing pathways probably exist in antral G-cells. In the dominant pathway progastrin is cleaved at three sites resulting in two major bioactive gastrins, gastrin-34 and gastrin-17. In the putative alternative pathway, progastrin may be processed only at the most C-terminal dibasic site resulting in the synthesis of gastrin-71. In terms of processing, sulfation enhances proteolytic processing, and blocks peptide degradation. Levels of sulfation differ between proteolytically-cleaved gastrins. Thus, gastrin-6 is almost 73% sulfated, whereas the larger gastrins are less than 50% sulfated. Sulfation levels are also tissue-specific.

The protein resides in the secreted. In terms of biological role, gastrin stimulates the stomach mucosa to produce and secrete hydrochloric acid and the pancreas to secrete its digestive enzymes. It also stimulates smooth muscle contraction and increases blood circulation and water secretion in the stomach and intestine. The polypeptide is Gastrin (GAST) (Homo sapiens (Human)).